The chain runs to 177 residues: CASP-like protein 5A2 (177 aa).

At 1–36 the chain is on the cytoplasmic side; that stretch reads MNASHPAVHPVGVPPAVAGQLPPRMRMKEIQGMPGT. Residues 37 to 57 traverse the membrane as a helical segment; the sequence is IGGLLLRLGQFCFALVAFSIM. The Extracellular segment spans residues 58 to 68; it reads VSIENFSTVTA. Asparagine 62 carries N-linked (GlcNAc...) asparagine glycosylation. The helical transmembrane segment at 69 to 89 threads the bilayer; it reads FCYLVAATVLQCLWSLALAII. Topologically, residues 90–103 are cytoplasmic; the sequence is DGYALLVKRSLRNS. A helical transmembrane segment spans residues 104 to 124; the sequence is LLVSLLVVGDGVTATLTFAAA. Residues 125–153 are Extracellular-facing; it reads CASAGITVLIGNDLRQCKENHCARYETAT. Residues 154–174 form a helical membrane-spanning segment; sequence ALAFLSWFMVSLSFILTFWLL. The Cytoplasmic segment spans residues 175 to 177; that stretch reads ATR.

The protein belongs to the Casparian strip membrane proteins (CASP) family. As to quaternary structure, homodimer and heterodimers.

It is found in the cell membrane. This Ginkgo biloba (Ginkgo) protein is CASP-like protein 5A2.